Here is a 263-residue protein sequence, read N- to C-terminus: MEDGGKHFVFVHGLGHGAWCWYRVVAALRAAGHRATALDMAAAGAHPARADEVGSLEEYSRPLLDAVAAAAPGERLVLVGHSLGGLSLALAMERFPDKVAAAVFLAACMPAAGKHMGITLEEFMRRIKPDFFMDSKTIVLNTNQEPRTAVLLGPKLLAEKLYNRSPPEDLTLATMLVRPGTNYIDDPIMKDETLLTEGNYGSVKRVFLVAMDDASSDEEMQRWTIDLSPGVEVEELAGADHMAMCSKPRELCDLLLRIAAKYD.

Serine 82 functions as the Acyl-ester intermediate in the catalytic mechanism. Residues aspartate 213 and histidine 241 each act as charge relay system in the active site.

The protein belongs to the AB hydrolase superfamily.

The polypeptide is Probable esterase PIR7A (PIR7A) (Oryza sativa subsp. indica (Rice)).